A 130-amino-acid polypeptide reads, in one-letter code: Small ribosomal subunit protein uS8 (130 aa).

It belongs to the universal ribosomal protein uS8 family. Part of the 30S ribosomal subunit.

Its function is as follows. One of the primary rRNA binding proteins, it binds directly to 16S rRNA central domain where it helps coordinate assembly of the platform of the 30S subunit. This chain is Small ribosomal subunit protein uS8, found in Cenarchaeum symbiosum (strain A).